The primary structure comprises 38 residues: Exendin-1 (38 aa).

A glycan (O-linked (HexNAc...) serine; in Exendin-1 and Exendin-1b) is linked at Ser32.

This sequence belongs to the glucagon family. O-linked glycan consists of Hex-HexNAc saccharide. Post-translationally, glycosylation may be of interest for the biological stability of exendin-1 and exendin-1b. Expressed by the venom gland.

It localises to the secreted. In terms of biological role, O-linked and free exendin-1 and exendin-1b have vasoactive intestinal peptide(VIP)/secretin-like biological activities. They interact with rat and human VIP receptors 1 (VIPR1) and 2 (VIPR2), with the highest affinity for the human VIPR2. They induce hypotension that is mediated by relaxation of cardiac smooth muscle. The sequence is that of Exendin-1 from Heloderma horridum horridum (Mexican beaded lizard).